A 453-amino-acid chain; its full sequence is Ribulose bisphosphate carboxylase large chain (453 aa).

A propeptide spanning residues 1–2 is cleaved from the precursor; sequence MS. Residue proline 3 is modified to N-acetylproline. Lysine 14 carries the N6,N6,N6-trimethyllysine modification. Positions 123 and 173 each coordinate substrate. Lysine 175 acts as the Proton acceptor in catalysis. Lysine 177 contributes to the substrate binding site. Mg(2+) is bound by residues lysine 201, aspartate 203, and glutamate 204. Residue lysine 201 is modified to N6-carboxylysine. Catalysis depends on histidine 294, which acts as the Proton acceptor. Substrate is bound by residues arginine 295, histidine 327, and serine 379.

The protein belongs to the RuBisCO large chain family. Type I subfamily. Heterohexadecamer of 8 large chains and 8 small chains; disulfide-linked. The disulfide link is formed within the large subunit homodimers. Mg(2+) is required as a cofactor. In terms of processing, the disulfide bond which can form in the large chain dimeric partners within the hexadecamer appears to be associated with oxidative stress and protein turnover.

The protein resides in the plastid. It is found in the chloroplast. It catalyses the reaction 2 (2R)-3-phosphoglycerate + 2 H(+) = D-ribulose 1,5-bisphosphate + CO2 + H2O. The enzyme catalyses D-ribulose 1,5-bisphosphate + O2 = 2-phosphoglycolate + (2R)-3-phosphoglycerate + 2 H(+). In terms of biological role, ruBisCO catalyzes two reactions: the carboxylation of D-ribulose 1,5-bisphosphate, the primary event in carbon dioxide fixation, as well as the oxidative fragmentation of the pentose substrate in the photorespiration process. Both reactions occur simultaneously and in competition at the same active site. In Hydnophytum formicarum (Ant plant), this protein is Ribulose bisphosphate carboxylase large chain.